A 339-amino-acid chain; its full sequence is tRNA methyltransferase 10 homolog A (339 aa).

2 disordered regions span residues 1-90 (MSSE…HDRK) and 282-339 (DKAC…SLPH). Residues 14–35 (NVDKKQGINEDQEESQKPRLGE) are compositionally biased toward basic and acidic residues. Positions 52–81 (KQWEEQRELRKQKRKEKRKRKKLERQCQME) form a coiled coil. Positions 61 to 74 (RKQKRKEKRKRKKL) are enriched in basic residues. The 191-residue stretch at 89–279 (RKRVRRDVVH…TILPQRKGAV (191 aa)) folds into the SAM-dependent MTase TRM10-type domain. Over residues 300-309 (GGSDSDSSEE) the composition is skewed to acidic residues. Residues 310-330 (EYSRNELDSPHEEKQDKENHT) are compositionally biased toward basic and acidic residues. S336 carries the phosphoserine modification.

The protein belongs to the class IV-like SAM-binding methyltransferase superfamily. TRM10 family. In terms of assembly, interacts with tRNA. As to expression, expressed in embryonic and fetal brain. It is expressed throughout the dorsal telencephalon at 8 and 11 weeks of gestation, with highest expression in ventricular zone and marginal zone. Detected in cerebellar cortex and nuclei, but not in dorsal telencephalon, at later stages.

Its subcellular location is the nucleus. The protein resides in the nucleolus. It catalyses the reaction guanosine(9) in tRNA + S-adenosyl-L-methionine = N(1)-methylguanosine(9) in tRNA + S-adenosyl-L-homocysteine + H(+). Functionally, S-adenosyl-L-methionine-dependent guanine N(1)-methyltransferase that catalyzes the formation of N(1)-methylguanine at position 9 (m1G9) in tRNAs. Probably not able to catalyze formation of N(1)-methyladenine at position 9 (m1A9) in tRNAs. The sequence is that of tRNA methyltransferase 10 homolog A (TRMT10A) from Homo sapiens (Human).